The following is a 264-amino-acid chain: Small ribosomal subunit protein eS1 (264 aa).

Positions 232 to 264 are disordered; it reads HGEGGGAGKPSGDEAGTKVERADGYEPPVQESV. Basic and acidic residues predominate over residues 242-255; sequence SGDEAGTKVERADG.

Belongs to the eukaryotic ribosomal protein eS1 family. Component of the small ribosomal subunit. Mature ribosomes consist of a small (40S) and a large (60S) subunit. The 40S subunit contains about 33 different proteins and 1 molecule of RNA (18S). The 60S subunit contains about 49 different proteins and 3 molecules of RNA (28S, 5.8S and 5S). Part of the small subunit (SSU) processome, composed of more than 70 proteins and the RNA chaperone small nucleolar RNA (snoRNA) U3.

Its subcellular location is the cytoplasm. The protein localises to the nucleus. The protein resides in the nucleolus. In terms of biological role, component of the small ribosomal subunit. The ribosome is a large ribonucleoprotein complex responsible for the synthesis of proteins in the cell. Part of the small subunit (SSU) processome, first precursor of the small eukaryotic ribosomal subunit. During the assembly of the SSU processome in the nucleolus, many ribosome biogenesis factors, an RNA chaperone and ribosomal proteins associate with the nascent pre-rRNA and work in concert to generate RNA folding, modifications, rearrangements and cleavage as well as targeted degradation of pre-ribosomal RNA by the RNA exosome. May play a role during erythropoiesis. The protein is Small ribosomal subunit protein eS1 of Taeniopygia guttata (Zebra finch).